Here is a 159-residue protein sequence, read N- to C-terminus: NADH-quinone oxidoreductase subunit B (159 aa).

The [4Fe-4S] cluster site is built by C32, C33, C97, and C126.

This sequence belongs to the complex I 20 kDa subunit family. NDH-1 is composed of 14 different subunits. Subunits NuoB, C, D, E, F, and G constitute the peripheral sector of the complex. [4Fe-4S] cluster serves as cofactor.

The protein resides in the cell inner membrane. It carries out the reaction a quinone + NADH + 5 H(+)(in) = a quinol + NAD(+) + 4 H(+)(out). Functionally, NDH-1 shuttles electrons from NADH, via FMN and iron-sulfur (Fe-S) centers, to quinones in the respiratory chain. The immediate electron acceptor for the enzyme in this species is believed to be ubiquinone. Couples the redox reaction to proton translocation (for every two electrons transferred, four hydrogen ions are translocated across the cytoplasmic membrane), and thus conserves the redox energy in a proton gradient. The polypeptide is NADH-quinone oxidoreductase subunit B (Helicobacter pylori (strain J99 / ATCC 700824) (Campylobacter pylori J99)).